The chain runs to 493 residues: Glutamyl-tRNA(Gln) amidotransferase subunit A (493 aa).

Catalysis depends on charge relay system residues K78 and S158. The active-site Acyl-ester intermediate is the S182.

Belongs to the amidase family. GatA subfamily. Heterotrimer of A, B and C subunits.

The catalysed reaction is L-glutamyl-tRNA(Gln) + L-glutamine + ATP + H2O = L-glutaminyl-tRNA(Gln) + L-glutamate + ADP + phosphate + H(+). Functionally, allows the formation of correctly charged Gln-tRNA(Gln) through the transamidation of misacylated Glu-tRNA(Gln) in organisms which lack glutaminyl-tRNA synthetase. The reaction takes place in the presence of glutamine and ATP through an activated gamma-phospho-Glu-tRNA(Gln). The sequence is that of Glutamyl-tRNA(Gln) amidotransferase subunit A from Rickettsia africae (strain ESF-5).